Consider the following 376-residue polypeptide: Glutamate 5-kinase (376 aa).

Lysine 15 provides a ligand contact to ATP. Substrate-binding residues include serine 56, aspartate 143, and asparagine 155. 175–176 lines the ATP pocket; that stretch reads SD. One can recognise a PUA domain in the interval 281 to 358; it reads KGTLTIDAGA…PDVMMILGIS (78 aa).

This sequence belongs to the glutamate 5-kinase family.

It localises to the cytoplasm. The catalysed reaction is L-glutamate + ATP = L-glutamyl 5-phosphate + ADP. It functions in the pathway amino-acid biosynthesis; L-proline biosynthesis; L-glutamate 5-semialdehyde from L-glutamate: step 1/2. Catalyzes the transfer of a phosphate group to glutamate to form L-glutamate 5-phosphate. The polypeptide is Glutamate 5-kinase (Rhodopseudomonas palustris (strain BisB5)).